Reading from the N-terminus, the 537-residue chain is Probable alpha-galactosidase A (537 aa).

The N-terminal stretch at Met-1–Gly-23 is a signal peptide. A disulfide bridge links Cys-46 with Cys-78. N-linked (GlcNAc...) asparagine glycans are attached at residues Asn-49, Asn-87, Asn-93, and Asn-123. An intrachain disulfide couples Cys-126 to Cys-156. The active-site Nucleophile is the Asp-154. N-linked (GlcNAc...) asparagine glycosylation occurs at Asn-203. Residue Asp-212 is the Proton donor of the active site. N-linked (GlcNAc...) asparagine glycosylation is found at Asn-355 and Asn-436. Positions Cys-413–Ser-537 constitute a Ricin B-type lectin domain. 2 disulfides stabilise this stretch: Cys-430–Cys-444 and Cys-469–Cys-482. Asn-491 is a glycosylation site (N-linked (GlcNAc...) asparagine).

It belongs to the glycosyl hydrolase 27 family.

It is found in the secreted. It carries out the reaction Hydrolysis of terminal, non-reducing alpha-D-galactose residues in alpha-D-galactosides, including galactose oligosaccharides, galactomannans and galactolipids.. In terms of biological role, hydrolyzes a variety of simple alpha-D-galactoside as well as more complex molecules such as oligosaccharides and polysaccharides. The chain is Probable alpha-galactosidase A (aglA) from Aspergillus niger (strain ATCC MYA-4892 / CBS 513.88 / FGSC A1513).